The sequence spans 184 residues: Photosystem I assembly protein Ycf4 (184 aa).

A run of 2 helical transmembrane segments spans residues 21 to 43 and 58 to 80; these read NFFW…SSSY and VFIP…GFYL.

Belongs to the Ycf4 family.

It is found in the plastid. It localises to the chloroplast thylakoid membrane. In terms of biological role, seems to be required for the assembly of the photosystem I complex. The protein is Photosystem I assembly protein Ycf4 of Psilotum nudum (Whisk fern).